The following is a 1755-amino-acid chain: Transposon TyH3 Gag-Pol polyprotein (1755 aa).

Composition is skewed to polar residues over residues 1–23 (MESQ…SVTS), 48–60 (TKAN…TPAS), and 127–152 (QSQF…GNTF). Disordered regions lie at residues 1-93 (MESQ…MMTQ), 126-173 (PQSQ…RPPP), and 352-421 (GSRN…SKST). Positions 153–165 (TDSSSADSDMTST) are enriched in low complexity. The segment at 299-401 (NNGIHINNKV…NSKSKTARAH (103 aa)) is RNA-binding. Residues 402–418 (NVSTSNNSPSTDNDSIS) show a composition bias toward low complexity. A Phosphoserine modification is found at Ser416. Asp461 (for protease activity; shared with dimeric partner) is an active-site residue. The tract at residues 583–640 (NVHTSESTRKYPYPFIHRMLAHANAQTIRYSLKNNTITYFNESDVDWSSAIDYQCPDC) is integrase-type zinc finger-like. The Integrase catalytic domain maps to 660–835 (NSYEPFQYLH…AGLDISTLLP (176 aa)). Residues Asp671 and Asp736 each coordinate Mg(2+). Disordered stretches follow at residues 956–1087 (SKAV…ETEK), 1092–1111 (RSPS…NIVP), and 1130–1187 (DLPL…DNET). Residues 960-969 (SPTDSTPPST) are compositionally biased toward low complexity. The segment covering 1005 to 1015 (STPQISNIEST) has biased composition (polar residues). The segment covering 1038–1053 (ESSHASKSKDFRHSDS) has biased composition (basic and acidic residues). 2 stretches are compositionally biased toward polar residues: residues 1054–1082 (YSEN…QISD) and 1101–1111 (PENNSSHNIVP). The Bipartite nuclear localization signal signature appears at 1178–1212 (KKRSLEDNETEIKVSRDTWNTKNMRSLEPPRSKKR). Residues 1338-1476 (NNYYITQLDI…DILGLEIKYQ (139 aa)) form the Reverse transcriptase Ty1/copia-type domain. 6 residues coordinate Mg(2+): Asp1346, Asp1427, Asp1428, Asp1610, Glu1652, and Asp1685. The RNase H Ty1/copia-type domain maps to 1610 to 1752 (DASYGNQPYY…IKTFKLLTNK (143 aa)).

The capsid protein forms a homotrimer, from which the VLPs are assembled. The protease is a homodimer, whose active site consists of two apposed aspartic acid residues. Initially, virus-like particles (VLPs) are composed of the structural unprocessed proteins Gag and Gag-Pol, and also contain the host initiator methionine tRNA (tRNA(i)-Met) which serves as a primer for minus-strand DNA synthesis, and a dimer of genomic Ty RNA. Processing of the polyproteins occurs within the particle and proceeds by an ordered pathway, called maturation. First, the protease (PR) is released by autocatalytic cleavage of the Gag-Pol polyprotein yielding capsid protein p45 and a Pol-p154 precursor protein. This cleavage is a prerequisite for subsequent processing of Pol-p154 at the remaining sites to release the mature structural and catalytic proteins. Maturation takes place prior to the RT reaction and is required to produce transposition-competent VLPs.

The protein resides in the cytoplasm. It is found in the nucleus. The enzyme catalyses DNA(n) + a 2'-deoxyribonucleoside 5'-triphosphate = DNA(n+1) + diphosphate. It catalyses the reaction Endonucleolytic cleavage to 5'-phosphomonoester.. Functionally, capsid protein (CA) is the structural component of the virus-like particle (VLP), forming the shell that encapsulates the retrotransposons dimeric RNA genome. The particles are assembled from trimer-clustered units and there are holes in the capsid shells that allow for the diffusion of macromolecules. CA also has nucleocapsid-like chaperone activity, promoting primer tRNA(i)-Met annealing to the multipartite primer-binding site (PBS), dimerization of Ty1 RNA and initiation of reverse transcription. The aspartyl protease (PR) mediates the proteolytic cleavages of the Gag and Gag-Pol polyproteins after assembly of the VLP. In terms of biological role, reverse transcriptase/ribonuclease H (RT) is a multifunctional enzyme that catalyzes the conversion of the retro-elements RNA genome into dsDNA within the VLP. The enzyme displays a DNA polymerase activity that can copy either DNA or RNA templates, and a ribonuclease H (RNase H) activity that cleaves the RNA strand of RNA-DNA heteroduplexes during plus-strand synthesis and hydrolyzes RNA primers. The conversion leads to a linear dsDNA copy of the retrotransposon that includes long terminal repeats (LTRs) at both ends. Its function is as follows. Integrase (IN) targets the VLP to the nucleus, where a subparticle preintegration complex (PIC) containing at least integrase and the newly synthesized dsDNA copy of the retrotransposon must transit the nuclear membrane. Once in the nucleus, integrase performs the integration of the dsDNA into the host genome. The protein is Transposon TyH3 Gag-Pol polyprotein (TY1B) of Saccharomyces cerevisiae (Baker's yeast).